The following is a 220-amino-acid chain: Sericin-2 (220 aa).

Low complexity-rich tracts occupy residues 1-131 (SSST…ASSS) and 141-155 (NESS…QNSA). The tract at residues 1–220 (SSSTNNSSGS…SSSSSSWSSA (220 aa)) is disordered. The segment covering 156–165 (TRSQVINADG) has biased composition (polar residues). Residues 166-220 (SQSSSSSSSSASNQASATSSSSVSADGSESESSSSSSSSSSSSSESSSSSSWSSA) show a composition bias toward low complexity.

In terms of tissue distribution, produced exclusively in the middle (MSG) section of silk glands.

It is found in the secreted. Provides the silk fibroin thread with a sticky coating. Acts as a cement by sticking silk threads together. The sequence is that of Sericin-2 (SER2) from Galleria mellonella (Greater wax moth).